The primary structure comprises 308 residues: 4-hydroxy-tetrahydrodipicolinate synthase (308 aa).

T53 is a binding site for pyruvate. Y141 serves as the catalytic Proton donor/acceptor. K169 (schiff-base intermediate with substrate) is an active-site residue. V209 lines the pyruvate pocket.

The protein belongs to the DapA family. Homotetramer; dimer of dimers.

Its subcellular location is the cytoplasm. The catalysed reaction is L-aspartate 4-semialdehyde + pyruvate = (2S,4S)-4-hydroxy-2,3,4,5-tetrahydrodipicolinate + H2O + H(+). It functions in the pathway amino-acid biosynthesis; L-lysine biosynthesis via DAP pathway; (S)-tetrahydrodipicolinate from L-aspartate: step 3/4. Its function is as follows. Catalyzes the condensation of (S)-aspartate-beta-semialdehyde [(S)-ASA] and pyruvate to 4-hydroxy-tetrahydrodipicolinate (HTPA). This is 4-hydroxy-tetrahydrodipicolinate synthase from Acidothermus cellulolyticus (strain ATCC 43068 / DSM 8971 / 11B).